The primary structure comprises 273 residues: HMP-PP phosphatase (273 aa).

D8 acts as the Nucleophile in catalysis. Mg(2+) is bound by residues D8, D10, and D212.

Belongs to the HAD-like hydrolase superfamily. Cof family. Mg(2+) serves as cofactor.

It carries out the reaction 4-amino-2-methyl-5-(diphosphooxymethyl)pyrimidine + H2O = 4-amino-2-methyl-5-(phosphooxymethyl)pyrimidine + phosphate + H(+). Catalyzes the hydrolysis of 4-amino-2-methyl-5-hydroxymethylpyrimidine pyrophosphate (HMP-PP) to 4-amino-2-methyl-5-hydroxymethylpyrimidine phosphate (HMP-P). This is HMP-PP phosphatase from Yersinia pseudotuberculosis serotype O:1b (strain IP 31758).